The chain runs to 92 residues: Small ribosomal subunit protein uS19 (92 aa).

Belongs to the universal ribosomal protein uS19 family.

Its function is as follows. Protein S19 forms a complex with S13 that binds strongly to the 16S ribosomal RNA. This is Small ribosomal subunit protein uS19 from Polynucleobacter asymbioticus (strain DSM 18221 / CIP 109841 / QLW-P1DMWA-1) (Polynucleobacter necessarius subsp. asymbioticus).